The sequence spans 462 residues: Kinetochore protein nsk1 (462 aa).

Positions 104–120 are enriched in polar residues; it reads PSKNHETSLSPSKSTID. 3 disordered regions span residues 104–161, 180–240, and 320–462; these read PSKN…CPGI, EKYG…PLRT, and NQLF…NIQS. Over residues 121–138 the composition is skewed to basic and acidic residues; the sequence is NNERKLDNEIDNYKHDVK. A compositionally biased stretch (polar residues) spans 146-156; it reads GKTSNPSQGTT. Residues 180–189 are compositionally biased toward basic and acidic residues; the sequence is EKYGKTDLGK. The segment covering 229–240 has biased composition (polar residues); that stretch reads KNRSSTFSPLRT. Residues 324–333 are compositionally biased toward basic and acidic residues; the sequence is KSEEEKDPVG. The span at 422 to 444 shows a compositional bias: polar residues; that stretch reads WPQNLAKNNINSEPNTPTKSNID. Residues 449–462 show a composition bias toward basic residues; sequence HSARAHKTRKNIQS.

In terms of assembly, interacts with dlc1. The dlc1-nsk1 complex seems to oligomerize in chain-like structures. Also binds directly to spindle microtubules. Phosphorylated by cdk1 at prometaphase arrest. Phosphorylation prevents nsk1 kinetochore and spindle targeting. Dephosphorylated by clp1 at anaphase onset controls its relocalization.

The protein resides in the nucleus. It is found in the nucleolus. It localises to the cytoplasm. The protein localises to the cytoskeleton. Its subcellular location is the spindle. The protein resides in the chromosome. It is found in the centromere. It localises to the kinetochore. In terms of biological role, ensures chromosome alignment and accurate chromosome segregation during mitosis. Promotes proper kinetochore-microtubule (k-MT) interactions during anaphase B. The phosphorylation status of nsk1 affects the proper k-MT coupling, ensuring that it interacts stably only at the correct time during mitosis. In Schizosaccharomyces pombe (strain 972 / ATCC 24843) (Fission yeast), this protein is Kinetochore protein nsk1 (nsk1).